Here is a 183-residue protein sequence, read N- to C-terminus: NADH-ubiquinone oxidoreductase 20.8 kDa subunit (183 aa).

2 CHCH domains span residues 44 to 87 and 88 to 130; these read GARC…IADI and NKSC…LGLK. 4 short sequence motifs (cx9C motif) span residues 47–57, 69–79, 91–101, and 112–122; these read CRDYNDDFMQC, CLKEGRRVTRC, CLEEFRKHWTC, and CRPAEWKLNKC. 4 disulfides stabilise this stretch: C47-C79, C57-C69, C91-C122, and C101-C112. The tract at residues 161-183 is disordered; the sequence is EPFVPPTQTGDNNKAPAAASSSS.

This sequence belongs to the complex I NDUFA8 subunit family. Complex I is composed of about 40 different subunits. This is a component of the hydrophobic fraction. Iron-sulfur cluster serves as cofactor.

Its subcellular location is the mitochondrion inner membrane. In terms of biological role, accessory subunit of the mitochondrial membrane respiratory chain NADH dehydrogenase (Complex I), that is believed not to be involved in catalysis. Complex I functions in the transfer of electrons from NADH to the respiratory chain. The immediate electron acceptor for the enzyme is believed to be ubiquinone. The protein is NADH-ubiquinone oxidoreductase 20.8 kDa subunit of Neurospora crassa (strain ATCC 24698 / 74-OR23-1A / CBS 708.71 / DSM 1257 / FGSC 987).